The sequence spans 245 residues: tRNA (guanine-N(1)-)-methyltransferase (245 aa).

Residues glycine 111 and 131 to 136 (MGDYVL) contribute to the S-adenosyl-L-methionine site.

This sequence belongs to the RNA methyltransferase TrmD family. In terms of assembly, homodimer.

It localises to the cytoplasm. The catalysed reaction is guanosine(37) in tRNA + S-adenosyl-L-methionine = N(1)-methylguanosine(37) in tRNA + S-adenosyl-L-homocysteine + H(+). Specifically methylates guanosine-37 in various tRNAs. In Staphylococcus epidermidis (strain ATCC 35984 / DSM 28319 / BCRC 17069 / CCUG 31568 / BM 3577 / RP62A), this protein is tRNA (guanine-N(1)-)-methyltransferase.